The chain runs to 149 residues: Large ribosomal subunit protein uL11 (149 aa).

The protein belongs to the universal ribosomal protein uL11 family. As to quaternary structure, part of the ribosomal stalk of the 50S ribosomal subunit. Interacts with L10 and the large rRNA to form the base of the stalk. L10 forms an elongated spine to which L12 dimers bind in a sequential fashion forming a multimeric L10(L12)X complex. One or more lysine residues are methylated.

Forms part of the ribosomal stalk which helps the ribosome interact with GTP-bound translation factors. The polypeptide is Large ribosomal subunit protein uL11 (Azorhizobium caulinodans (strain ATCC 43989 / DSM 5975 / JCM 20966 / LMG 6465 / NBRC 14845 / NCIMB 13405 / ORS 571)).